Reading from the N-terminus, the 602-residue chain is Aspartate--tRNA(Asp/Asn) ligase (602 aa).

Glu176 lines the L-aspartate pocket. Residues 200–203 form an aspartate region; sequence QQFK. 2 residues coordinate L-aspartate: Arg222 and His452. 222–224 provides a ligand contact to ATP; that stretch reads RDE. Glu490 lines the ATP pocket. Arg497 is a binding site for L-aspartate. 542-545 contributes to the ATP binding site; it reads GIDR.

This sequence belongs to the class-II aminoacyl-tRNA synthetase family. Type 1 subfamily. As to quaternary structure, homodimer.

It localises to the cytoplasm. The catalysed reaction is tRNA(Asx) + L-aspartate + ATP = L-aspartyl-tRNA(Asx) + AMP + diphosphate. Its function is as follows. Aspartyl-tRNA synthetase with relaxed tRNA specificity since it is able to aspartylate not only its cognate tRNA(Asp) but also tRNA(Asn). Reaction proceeds in two steps: L-aspartate is first activated by ATP to form Asp-AMP and then transferred to the acceptor end of tRNA(Asp/Asn). The sequence is that of Aspartate--tRNA(Asp/Asn) ligase from Rickettsia akari (strain Hartford).